Consider the following 447-residue polypeptide: NADP-specific glutamate dehydrogenase (447 aa).

Positions 92, 113, and 116 each coordinate substrate. Catalysis depends on K128, which acts as the Proton donor. Residue G167 participates in substrate binding. NADP(+) contacts are provided by T212 and N243. S379 contacts substrate.

It belongs to the Glu/Leu/Phe/Val dehydrogenases family. As to quaternary structure, homohexamer.

The catalysed reaction is L-glutamate + NADP(+) + H2O = 2-oxoglutarate + NH4(+) + NADPH + H(+). Its function is as follows. Catalyzes the reversible oxidative deamination of glutamate to alpha-ketoglutarate and ammonia. The polypeptide is NADP-specific glutamate dehydrogenase (gdh) (Corynebacterium efficiens (strain DSM 44549 / YS-314 / AJ 12310 / JCM 11189 / NBRC 100395)).